Here is a 447-residue protein sequence, read N- to C-terminus: N-succinylarginine dihydrolase (447 aa).

Residues 19-28, N110, and 137-138 contribute to the substrate site; these read AGLSFGNEAS and HR. Residue E174 is part of the active site. R212 is a binding site for substrate. The active site involves H248. The substrate site is built by D250 and N359. C365 (nucleophile) is an active-site residue.

It belongs to the succinylarginine dihydrolase family. Homodimer.

It catalyses the reaction N(2)-succinyl-L-arginine + 2 H2O + 2 H(+) = N(2)-succinyl-L-ornithine + 2 NH4(+) + CO2. It participates in amino-acid degradation; L-arginine degradation via AST pathway; L-glutamate and succinate from L-arginine: step 2/5. Functionally, catalyzes the hydrolysis of N(2)-succinylarginine into N(2)-succinylornithine, ammonia and CO(2). The chain is N-succinylarginine dihydrolase from Escherichia coli (strain SMS-3-5 / SECEC).